A 417-amino-acid polypeptide reads, in one-letter code: Serine--tRNA ligase (417 aa).

232-234 (TAE) serves as a coordination point for L-serine. Residues 263–265 (RRE) and V279 each bind ATP. An L-serine-binding site is contributed by E286. ATP is bound at residue 350-353 (EISS). Position 385 (S385) interacts with L-serine.

It belongs to the class-II aminoacyl-tRNA synthetase family. Type-1 seryl-tRNA synthetase subfamily. As to quaternary structure, homodimer. The tRNA molecule binds across the dimer.

The protein localises to the cytoplasm. It catalyses the reaction tRNA(Ser) + L-serine + ATP = L-seryl-tRNA(Ser) + AMP + diphosphate + H(+). The enzyme catalyses tRNA(Sec) + L-serine + ATP = L-seryl-tRNA(Sec) + AMP + diphosphate + H(+). It participates in aminoacyl-tRNA biosynthesis; selenocysteinyl-tRNA(Sec) biosynthesis; L-seryl-tRNA(Sec) from L-serine and tRNA(Sec): step 1/1. Its function is as follows. Catalyzes the attachment of serine to tRNA(Ser). Is also able to aminoacylate tRNA(Sec) with serine, to form the misacylated tRNA L-seryl-tRNA(Sec), which will be further converted into selenocysteinyl-tRNA(Sec). The chain is Serine--tRNA ligase from Leptospira borgpetersenii serovar Hardjo-bovis (strain JB197).